The following is a 73-amino-acid chain: MSNPCQKEACAIQDCLLSHQYDDAKCAKVIDQLYICCSKFYNDNGKDSRSPCCPLPSLLELKMKQRKLTPGDS.

Residues 2–44 (SNPCQKEACAIQDCLLSHQYDDAKCAKVIDQLYICCSKFYNDN) form the CHCH domain. 2 consecutive short sequence motifs (cx9C motif) follow at residues 5 to 15 (CQKEACAIQDC) and 26 to 36 (CAKVIDQLYIC). 2 cysteine pairs are disulfide-bonded: cysteine 5–cysteine 36 and cysteine 15–cysteine 26.

The protein belongs to the CMC4 family.

The protein resides in the mitochondrion intermembrane space. This is Cx9C motif-containing protein 4, mitochondrial (CMC4) from Saccharomyces cerevisiae (strain ATCC 204508 / S288c) (Baker's yeast).